The chain runs to 287 residues: Orotidine 5'-phosphate decarboxylase (287 aa).

Residue K97 is the Proton donor of the active site.

It belongs to the OMP decarboxylase family. Type 2 subfamily.

It catalyses the reaction orotidine 5'-phosphate + H(+) = UMP + CO2. Its pathway is pyrimidine metabolism; UMP biosynthesis via de novo pathway; UMP from orotate: step 2/2. This is Orotidine 5'-phosphate decarboxylase from Clostridium perfringens (strain ATCC 13124 / DSM 756 / JCM 1290 / NCIMB 6125 / NCTC 8237 / Type A).